The following is a 361-amino-acid chain: sn-glycerol-3-phosphate import ATP-binding protein UgpC (361 aa).

An ABC transporter domain is found at 4–235; that stretch reads VTLRNVRKTY…PATTFVASFI (232 aa). 37-44 is a binding site for ATP; that stretch reads GPSGCGKS.

Belongs to the ABC transporter superfamily. sn-glycerol-3-phosphate importer (TC 3.A.1.1.3) family. In terms of assembly, the complex is composed of two ATP-binding proteins (UgpC), two transmembrane proteins (UgpA and UgpE) and a solute-binding protein (UgpB).

The protein resides in the cell inner membrane. It carries out the reaction sn-glycerol 3-phosphate(out) + ATP + H2O = sn-glycerol 3-phosphate(in) + ADP + phosphate + H(+). In terms of biological role, part of the ABC transporter complex UgpBAEC involved in sn-glycerol-3-phosphate (G3P) import. Responsible for energy coupling to the transport system. This is sn-glycerol-3-phosphate import ATP-binding protein UgpC from Rhodopseudomonas palustris (strain BisA53).